Consider the following 253-residue polypeptide: Patatin-like phospholipase domain-containing protein 4 (253 aa).

The PNPLA domain maps to 6–176 (LSFAACGFLG…TNALPILPVG (171 aa)). The short motif at 41 to 45 (GASAG) is the GXSXG element. The active-site Nucleophile is Ser43. Asp163 acts as the Proton acceptor in catalysis. The DGA/G signature appears at 163 to 165 (DGG).

In terms of tissue distribution, expressed in all tissues examined, including heart, brain, placenta, lung, liver, muscle, kidney, pancreas and spleen.

Its subcellular location is the mitochondrion. It carries out the reaction a triacylglycerol + H2O = a diacylglycerol + a fatty acid + H(+). It catalyses the reaction a 1,2-diacyl-sn-glycero-3-phosphocholine + H2O = a 1-acyl-sn-glycero-3-phosphocholine + a fatty acid + H(+). The enzyme catalyses an all-trans-retinyl ester + H2O = all-trans-retinol + a fatty acid + H(+). The catalysed reaction is 2 a 1-acylglycerol = a 1,2-diacylglycerol + glycerol. It carries out the reaction a 1-acylglycerol + a 1,2-diacylglycerol = a triacylglycerol + glycerol. It catalyses the reaction a 1-acylglycerol + a 1,3-diacylglycerol = a triacylglycerol + glycerol. The enzyme catalyses a triacylglycerol + H2O = a 1,2-diacylglycerol + a fatty acid + H(+). The catalysed reaction is a triacylglycerol + H2O = a 1,3-diacylglycerol + a fatty acid + H(+). It carries out the reaction a triacylglycerol + all-trans-retinol = an all-trans-retinyl ester + a diacylglycerol. It catalyses the reaction 2 1-(9Z-octadecenoyl)-glycerol = 1,2-di-(9Z-octadecenoyl)-glycerol + glycerol. The enzyme catalyses 1-(9Z-octadecenoyl)-glycerol + 1,2-di-(9Z-octadecenoyl)-glycerol = 1,2,3-tri-(9Z-octadecenoyl)-glycerol + glycerol. The catalysed reaction is 1-(9Z-octadecenoyl)-glycerol + 1,3-di-(9Z-octadecenoyl)-glycerol = 1,2,3-tri-(9Z-octadecenoyl)-glycerol + glycerol. It carries out the reaction 1,2-di-(9Z-octadecenoyl)-glycerol + (9Z)-octadecenoate + H(+) = 1,2,3-tri-(9Z-octadecenoyl)-glycerol + H2O. It catalyses the reaction 1,2,3-tri-(9Z-octadecenoyl)-glycerol + H2O = 1,3-di-(9Z-octadecenoyl)-glycerol + (9Z)-octadecenoate + H(+). The enzyme catalyses all-trans-retinyl hexadecanoate + H2O = all-trans-retinol + hexadecanoate + H(+). The catalysed reaction is 1,2,3-tri-(9Z-octadecenoyl)-glycerol + all-trans-retinol = all-trans-retinyl 9Z-octadecenoate + di-(9Z)-octadecenoylglycerol. Its activity is regulated as follows. The triglyceride lipase activity is inhibited by BEL ((E)-6-(bromomethylene)-3-(1-naphthalenyl)-2H-tetrahydropyran-2-one), a suicide substrate inhibitor. In terms of biological role, has abundant triacylglycerol lipase activity. Transfers fatty acid from triglyceride to retinol, hydrolyzes retinylesters, and generates 1,3-diacylglycerol from triglycerides. Additionally possesses acylglycerol transacylase and phospholipase A2 activities. This chain is Patatin-like phospholipase domain-containing protein 4, found in Homo sapiens (Human).